The following is a 241-amino-acid chain: Probable transcriptional regulatory protein NE0210 (241 aa).

This sequence belongs to the TACO1 family.

The protein resides in the cytoplasm. This is Probable transcriptional regulatory protein NE0210 from Nitrosomonas europaea (strain ATCC 19718 / CIP 103999 / KCTC 2705 / NBRC 14298).